Consider the following 375-residue polypeptide: Putative F-box protein At1g12190 (375 aa).

The F-box domain maps to 1–46 (MACVKFPWELMEEILYRVPSLSLSRFKTVSKEWNTLLNDKTFIKKH).

This is Putative F-box protein At1g12190 from Arabidopsis thaliana (Mouse-ear cress).